The chain runs to 362 residues: Methylthioribose-1-phosphate isomerase (362 aa).

Asp252 serves as the catalytic Proton donor.

It belongs to the eIF-2B alpha/beta/delta subunits family. MtnA subfamily.

Its subcellular location is the cytoplasm. The protein resides in the nucleus. The enzyme catalyses 5-(methylsulfanyl)-alpha-D-ribose 1-phosphate = 5-(methylsulfanyl)-D-ribulose 1-phosphate. It functions in the pathway amino-acid biosynthesis; L-methionine biosynthesis via salvage pathway; L-methionine from S-methyl-5-thio-alpha-D-ribose 1-phosphate: step 1/6. Functionally, catalyzes the interconversion of methylthioribose-1-phosphate (MTR-1-P) into methylthioribulose-1-phosphate (MTRu-1-P). This is Methylthioribose-1-phosphate isomerase from Drosophila persimilis (Fruit fly).